We begin with the raw amino-acid sequence, 226 residues long: Protein BASIC PENTACYSTEINE7 (226 aa).

The interval 42 to 116 is disordered; the sequence is IDLSQEPPAE…PSIPETKREK (75 aa). Over residues 66–76 the composition is skewed to basic and acidic residues; it reads RDSRNDTETVK. Positions 88-105 are enriched in basic residues; it reads LKPKPQRKKRSVSNKSKK.

It belongs to the BBR/BPC family. As to expression, expressed in seedlings, leaves and pistils. Detected in anthers, in pollen grains, in young rosette, in leaf vasculature, in the lateral and primary roots, in embryo sac, and in the whole ovule.

The protein localises to the nucleus. Its function is as follows. Transcriptional regulator that specifically binds to GA-rich elements (GAGA-repeats) present in regulatory sequences of genes involved in developmental processes. This is Protein BASIC PENTACYSTEINE7 (BPC7) from Arabidopsis thaliana (Mouse-ear cress).